Here is a 255-residue protein sequence, read N- to C-terminus: MVTDKSKKAKTEEENVEQIDAELVLSIEKLQEIQDDLEKINEKASDEVLEVEQKYNVIRKPVYDKRNEIIKTIPDFWLTAFLSHPALGELLTEEDQKIFKYLSSLDVEDAKDVKSGYSITFSFNPNPFFEDGKLTKTFTFLEEGTTKITATPIKWKEGKGLANGVNHEKNGNKRALPEESFFTWFSDAQHKEDVEDEMQDEVADIIKEDLWPNPLTYFNNDADEEDFDGDDDGDEEEKEGDSDEDDDEEDEVGEE.

The stretch at 19-60 (IDAELVLSIEKLQEIQDDLEKINEKASDEVLEVEQKYNVIRK) forms a coiled coil. Positions 213 to 255 (NPLTYFNNDADEEDFDGDDDGDEEEKEGDSDEDDDEEDEVGEE) are disordered. Positions 221 to 255 (DADEEDFDGDDDGDEEEKEGDSDEDDDEEDEVGEE) are enriched in acidic residues.

Belongs to the nucleosome assembly protein (NAP) family. Can form homomeric and heteromeric protein complexes with NRP1. Binds histones H2A and H2B and associates with chromatin in vivo. Ubiquitous.

The protein resides in the cytoplasm. The protein localises to the nucleus. Functionally, acts as a histone H2A/H2B chaperone in nucleosome assembly, playing a critical role for the correct expression of genes involved in root proliferation and patterning. Required with NRP1 for the maintenance of cell proliferation and differentiation in postembryonic root growth. Involved in both intramolecular and intermolecular somatic homologous recombination. This Arabidopsis thaliana (Mouse-ear cress) protein is NAP1-related protein 2 (NRP2).